A 345-amino-acid polypeptide reads, in one-letter code: Dimethyladenosine transferase 1, mitochondrial (345 aa).

The N-terminal 27 residues, Met1 to Leu27, are a transit peptide targeting the mitochondrion. S-adenosyl-L-methionine contacts are provided by Leu38, Gly63, Glu85, Lys86, Asp111, Val112, and Asn141.

This sequence belongs to the class I-like SAM-binding methyltransferase superfamily. rRNA adenine N(6)-methyltransferase family. KsgA subfamily. Interacts with mitochondrial RNA polymerase POLRMT. Interacts with TFAM. Bound to the maturing mtSSU until the late stages of assembly.

The protein localises to the mitochondrion. It catalyses the reaction adenosine(N)/adenosine(N+1) in rRNA + 4 S-adenosyl-L-methionine = N(6)-dimethyladenosine(N)/N(6)-dimethyladenosine(N+1) in rRNA + 4 S-adenosyl-L-homocysteine + 4 H(+). In terms of biological role, mitochondrial methyltransferase which uses S-adenosyl methionine to dimethylate two highly conserved adjacent adenosine residues (A1583 and A1584) within the loop of helix 45 at the 3-prime end of 12S rRNA, thereby regulating the assembly or stability of the small subunit of the mitochondrial ribosome. Also required for basal transcription of mitochondrial DNA, probably via its interaction with POLRMT and TFAM. Stimulates transcription independently of the methyltransferase activity. In Macaca fascicularis (Crab-eating macaque), this protein is Dimethyladenosine transferase 1, mitochondrial (TFB1M).